The primary structure comprises 422 residues: MDKLRITGGSPLRGEVTVSGAKNAALPILCASLLTAEPLVLGNVPQLNDTSTTLRLLGRMGVRAERAGDGTVTLQADQVDNLEAPYELVKTMRASILVLGPLLARFGQARVSLPGGCAIGQRPVDQHIKGLAALGAEIEIEHGFVVARATRLKGASIRTDMVTVTGTENLLMAAVLAEGQTVLENAAREPEVVDLAELLIKMGARIQGHGTDRIVVDGVARLHGARHDVIADRIEAGTFLCAVGAAGGDITLRGAAPDTMGATLDKLVEAGLTIETGPDWIRGAMHGRPCAVGARTHEYPGFATDMQAQLMALDTVADGTAVIVENIFENRYMHVQELCRLGADIDIDGHTAVVRGVARLSGATVMATDLRASASLVIAGLAAEGETLVDRIYHLDRGYDRMEVKLRALGASIQRVTGKETA.

A phosphoenolpyruvate-binding site is contributed by 22 to 23 (KN). Arginine 93 is a binding site for UDP-N-acetyl-alpha-D-glucosamine. Residue cysteine 117 is the Proton donor of the active site. Cysteine 117 is modified (2-(S-cysteinyl)pyruvic acid O-phosphothioketal). UDP-N-acetyl-alpha-D-glucosamine-binding positions include 122 to 126 (RPVDQ), aspartate 305, and isoleucine 327.

This sequence belongs to the EPSP synthase family. MurA subfamily.

It is found in the cytoplasm. The enzyme catalyses phosphoenolpyruvate + UDP-N-acetyl-alpha-D-glucosamine = UDP-N-acetyl-3-O-(1-carboxyvinyl)-alpha-D-glucosamine + phosphate. The protein operates within cell wall biogenesis; peptidoglycan biosynthesis. Cell wall formation. Adds enolpyruvyl to UDP-N-acetylglucosamine. The polypeptide is UDP-N-acetylglucosamine 1-carboxyvinyltransferase (Bordetella parapertussis (strain 12822 / ATCC BAA-587 / NCTC 13253)).